A 366-amino-acid polypeptide reads, in one-letter code: Phospho-N-acetylmuramoyl-pentapeptide-transferase (366 aa).

10 helical membrane-spanning segments follow: residues alanine 25–asparagine 45, glycine 70–tryptophan 90, leucine 93–phenylalanine 113, leucine 134–alanine 154, phenylalanine 174–glycine 194, glycine 205–alanine 225, leucine 245–proline 265, alanine 268–valine 288, valine 297–phenylalanine 317, and glutamine 343–leucine 363.

Belongs to the glycosyltransferase 4 family. MraY subfamily. It depends on Mg(2+) as a cofactor.

It is found in the cell inner membrane. The catalysed reaction is UDP-N-acetyl-alpha-D-muramoyl-L-alanyl-gamma-D-glutamyl-meso-2,6-diaminopimeloyl-D-alanyl-D-alanine + di-trans,octa-cis-undecaprenyl phosphate = di-trans,octa-cis-undecaprenyl diphospho-N-acetyl-alpha-D-muramoyl-L-alanyl-D-glutamyl-meso-2,6-diaminopimeloyl-D-alanyl-D-alanine + UMP. The protein operates within cell wall biogenesis; peptidoglycan biosynthesis. Catalyzes the initial step of the lipid cycle reactions in the biosynthesis of the cell wall peptidoglycan: transfers peptidoglycan precursor phospho-MurNAc-pentapeptide from UDP-MurNAc-pentapeptide onto the lipid carrier undecaprenyl phosphate, yielding undecaprenyl-pyrophosphoryl-MurNAc-pentapeptide, known as lipid I. The protein is Phospho-N-acetylmuramoyl-pentapeptide-transferase of Agrobacterium fabrum (strain C58 / ATCC 33970) (Agrobacterium tumefaciens (strain C58)).